The following is a 388-amino-acid chain: bZIP transcription factor 1-D (388 aa).

Disordered stretches follow at residues 1–49 (MGSS…PIPP), 103–249 (FAPY…GPTT), 261–316 (TASS…RKQA), and 348–388 (ELLS…KDTN). Composition is skewed to low complexity over residues 23 to 33 (PPATSSTATPT) and 117 to 129 (AAGT…TAGG). The segment covering 169–179 (SGASANGTISQ) has biased composition (polar residues). The span at 180–193 (SGESGSESSSEGSE) shows a compositional bias: low complexity. The segment covering 214-231 (RSSQNGVSPSPSQAQLKQ) has biased composition (polar residues). The 64-residue stretch at 293 to 356 (ELKRQKRKQS…DELLSKNSSL (64 aa)) folds into the bZIP domain. Positions 295–314 (KRQKRKQSNRDSARRSRLRK) are basic motif. Basic and acidic residues predominate over residues 302–316 (SNRDSARRSRLRKQA). Residues 321-356 (LAQRAEVLKQENASLKDEVSRIRKEYDELLSKNSSL) are leucine-zipper. 2 stretches are compositionally biased toward basic and acidic residues: residues 359-369 (NVGDKQHKTDE) and 375-388 (KLQH…KDTN).

It belongs to the bZIP family. Highly expressed in roots and at lower levels in stems and leaves.

It is found in the nucleus. In terms of biological role, probable transcription factor that may be involved in responses to fungal pathogen infection and abiotic stresses. In Triticum aestivum (Wheat), this protein is bZIP transcription factor 1-D.